The following is a 314-amino-acid chain: MNNKTIGIIGVGNVGSTLAFILATNNICSNILLKDIKNNISEAMALDISQAMQETNSNTKITACLNNEDFKDCDIIIITAGIARKPNMSRDDLLITNAKIVASVMNDISKNNPNAIIIIISNPLDSMVYTALKSSNYPKNKILGMAGTLDSARMSYFIAEKLGFPNVNIKTSVIGGHGDSMVPLIDFSTVDGKKLNEVLSKEDIDDIVIKTKNGGGQIVKLLETGSAYYAPAYSTIAMIEAILNDTKKCFACATILNGEYGYKDIVSGVPVILGKDGVEKIIELEISDFEKEQFSNSINSVKESINILENNFFN.

9–15 (IGVGNVG) is an NAD(+) binding site. Substrate-binding residues include arginine 84 and arginine 90. Residues asparagine 97 and 120–122 (ISN) each bind NAD(+). Asparagine 122 and arginine 153 together coordinate substrate. Histidine 177 acts as the Proton acceptor in catalysis.

Belongs to the LDH/MDH superfamily.

It catalyses the reaction (S)-malate + NAD(+) = oxaloacetate + NADH + H(+). Catalyzes the reversible oxidation of malate to oxaloacetate. The polypeptide is Malate dehydrogenase (Aliarcobacter butzleri (strain RM4018) (Arcobacter butzleri)).